The chain runs to 326 residues: CRISPR-associated endonuclease Cas1 (326 aa).

Residues Glu-191, His-255, and Asp-269 each coordinate Mn(2+).

The protein belongs to the CRISPR-associated endonuclease Cas1 family. Homodimer. Interacts with Cas3, in the absence of crRNA. The cofactor is Mg(2+). Requires Mn(2+) as cofactor.

CRISPR (clustered regularly interspaced short palindromic repeat), is an adaptive immune system that provides protection against mobile genetic elements (viruses, transposable elements and conjugative plasmids). CRISPR clusters contain sequences complementary to antecedent mobile elements and target invading nucleic acids. CRISPR clusters are transcribed and processed into CRISPR RNA (crRNA). Acts as a dsDNA endonuclease. Involved in the integration of spacer DNA into the CRISPR cassette. The chain is CRISPR-associated endonuclease Cas1 from Pectobacterium atrosepticum (strain SCRI 1043 / ATCC BAA-672) (Erwinia carotovora subsp. atroseptica).